The sequence spans 1183 residues: MAGQVVQYGRHRKRRNYARISEVLELPNLIEIQTKSYDWFLKEGLLEMFRDISPIEDFTGNLSLEFVDYRLGEPKYDLEESKNRDATYAAPLRVKVRLIIKETGEVKEQEVFMGDFPLMTDTGTFVINGAERVIVSQLVRSPSVYFNEKIDKNGRENYDATIIPNRGAWLEYETDAKDVVYVRIDRTRKLPLTVLLRALGFSNDQEIIDLLGDSEYLRNTLEKDGTENTEQALLEIYERLRPGEPPTVENAKSLLYSRFFDPKRYDLASVGRYKANKKLHLKHRLFNQRLAEPIVNSETGEIVAEEGTVLDRRKLDEIMEVLETNANSEVFELEGTVIDEPVEIQSIKVYVPNDEEGRTTTVIGNALPDSEVKCITPADIIASMSYFFNLLNGIGYTDDIDHLGNRRLRSVGELLQNQFRIGLSRMERVVRERMSIQDTDSITPQQLINIRPVIASIKEFFGSSQLSQFMDQANPLAELTHKRRLSALGPGGLTRERAQMEVRDVHYSHYGRMCPIETPEGPNIGLINSLSSYARVNEFGFIETPYRKVDLDTNSITDQIDYLTADEEDSYVVAQANSRLDENGRFLDDEVVCRFRGNNTVMAKEKMDYMDVSPKQVVSAATACIPFLENDDSNRALMGANMQRQAVPLMNTEAPFVGTGMEHVAARDSGAAITAKYRGRVEHVESKEILVRRLVEENGTEHEGELDRYPLAKFKRSNTGTCYNQRPIVSVGDVVEYNEILADGPSMELGEMALGRNVVVGFMTWDGYNYEDAVIMSERLVKDDVYTSIHIEEYESEARDTKLGPEEITRDIPNVSENALKNLDDRGIVYVGAEVKDGDILVGKVTPKGVTELTAEERLLHAIFGEKAREVRDTSLRVPHGAGGIVLDVKVFNREEGDDTLSPGVNQLVRVYIVQKRKIHVGDKMCGRHGNKGVISKIVPEEDMPYLPDGRPIDIMLNPLGVPSRMNIGQVLELHLGMAAKNLGIHVASPVFDGANDDDVWSTIEEAGMARDGKTVLYDGRTGEPFDNRISVGVMYMLKLAHMVDDKLHARSTGPYSLVTQQPLGGKAQFGGQRFGEMEVWALEAYGAAYTLQEILTYKSDDTVGRVKTYEAIVKGENISRPSVPESFRVLMKELQSLGLDVKVMDEQDNEIEMADVDDEDATERKVDLQQKDVPETQKETTD.

A compositionally biased stretch (acidic residues) spans 1149 to 1162; sequence DNEIEMADVDDEDA. Positions 1149 to 1183 are disordered; it reads DNEIEMADVDDEDATERKVDLQQKDVPETQKETTD. Basic and acidic residues predominate over residues 1163–1183; the sequence is TERKVDLQQKDVPETQKETTD.

This sequence belongs to the RNA polymerase beta chain family. In terms of assembly, the RNAP catalytic core consists of 2 alpha, 1 beta, 1 beta' and 1 omega subunit. When a sigma factor is associated with the core the holoenzyme is formed, which can initiate transcription.

It catalyses the reaction RNA(n) + a ribonucleoside 5'-triphosphate = RNA(n+1) + diphosphate. DNA-dependent RNA polymerase catalyzes the transcription of DNA into RNA using the four ribonucleoside triphosphates as substrates. The polypeptide is DNA-directed RNA polymerase subunit beta (Staphylococcus haemolyticus (strain JCSC1435)).